Consider the following 340-residue polypeptide: Large ribosomal subunit protein uL29m (340 aa).

A compositionally biased stretch (polar residues) spans 1–10; it reads MIRSLHTSAV. Positions 1–22 are disordered; the sequence is MIRSLHTSAVRQGRKKWPKPLP.

The protein belongs to the universal ribosomal protein uL29 family. As to quaternary structure, component of the mitochondrial large ribosomal subunit. Mature mitochondrial ribosomes consist of a small (37S) and a large (54S) subunit. The 37S subunit contains at least 33 different proteins and 1 molecule of RNA (15S). The 54S subunit contains at least 45 different proteins and 1 molecule of RNA (21S).

Its subcellular location is the mitochondrion. The chain is Large ribosomal subunit protein uL29m (MRPL4) from Yarrowia lipolytica (strain CLIB 122 / E 150) (Yeast).